Reading from the N-terminus, the 92-residue chain is Large ribosomal subunit protein bL25 (92 aa).

Belongs to the bacterial ribosomal protein bL25 family. In terms of assembly, part of the 50S ribosomal subunit; part of the 5S rRNA/L5/L18/L25 subcomplex. Contacts the 5S rRNA. Binds to the 5S rRNA independently of L5 and L18.

In terms of biological role, this is one of the proteins that binds to the 5S RNA in the ribosome where it forms part of the central protuberance. This is Large ribosomal subunit protein bL25 from Aliivibrio fischeri (strain MJ11) (Vibrio fischeri).